Consider the following 336-residue polypeptide: uncharacterized protein (336 aa).

The tract at residues 162–195 is disordered; that stretch reads ARGLPVHSSFKQNNSSQTSSNKGTTTVAAGSGSD. Residues 169–187 show a composition bias toward low complexity; sequence SSFKQNNSSQTSSNKGTTT.

The protein belongs to the AHA1 family.

This is an uncharacterized protein from Schizosaccharomyces pombe (strain 972 / ATCC 24843) (Fission yeast).